Here is a 200-residue protein sequence, read N- to C-terminus: ADP-ribosylation factor-like protein 4A (200 aa).

Residue Gly-2 is the site of N-myristoyl glycine attachment. Residues 27-34 (GLDCAGKT), 75-79 (DVGGQ), and 134-137 (NKQD) each bind GTP.

It belongs to the small GTPase superfamily. Arf family. As to quaternary structure, interacts with CYTH2. Interacts with KPNA2; the interaction is direct. Does not interact with ARL4A. In terms of processing, myristoylated. Expressed strongly in testis and liver. Expressed slightly in heart, spleen, lung and kidney.

It is found in the cell membrane. The protein localises to the cytoplasm. Its subcellular location is the nucleus. It localises to the nucleolus. Functionally, small GTP-binding protein which cycles between an inactive GDP-bound and an active GTP-bound form, and the rate of cycling is regulated by guanine nucleotide exchange factors (GEF) and GTPase-activating proteins (GAP). GTP-binding protein that does not act as an allosteric activator of the cholera toxin catalytic subunit. Recruits CYTH1, CYTH2, CYTH3 and CYTH4 to the plasma membrane in GDP-bound form. In Mus musculus (Mouse), this protein is ADP-ribosylation factor-like protein 4A (Arl4a).